The following is a 223-amino-acid chain: Endonuclease V (223 aa).

Residues Asp-35 and Asp-103 each contribute to the Mg(2+) site.

It belongs to the endonuclease V family. The cofactor is Mg(2+).

It is found in the cytoplasm. It catalyses the reaction Endonucleolytic cleavage at apurinic or apyrimidinic sites to products with a 5'-phosphate.. DNA repair enzyme involved in the repair of deaminated bases. Selectively cleaves double-stranded DNA at the second phosphodiester bond 3' to a deoxyinosine leaving behind the intact lesion on the nicked DNA. This chain is Endonuclease V, found in Salmonella enteritidis PT4 (strain P125109).